We begin with the raw amino-acid sequence, 199 residues long: Prolactin-2 (199 aa).

Disulfide bonds link C4/C11, C58/C174, and C191/C199.

It belongs to the somatotropin/prolactin family.

Its subcellular location is the secreted. The polypeptide is Prolactin-2 (Crocodylus novaeguineae (Crocodile)).